The sequence spans 1603 residues: Gag-Pol polyprotein (1603 aa).

The segment covering 124–141 (KGEEVGETTAQRDAKMAP) has biased composition (basic and acidic residues). The interval 124-144 (KGEEVGETTAQRDAKMAPEKM) is disordered. Positions 172–175 (PPPY) match the PPXY motif motif. Positions 180–184 (LYPSL) match the LYPX(n)L motif motif. Residues 219-229 (LTDWARIREEL) carry the Nuclear export signal motif. CCHC-type zinc fingers lie at residues 507–524 (GLCYTCGSPGHYQAQCPK) and 533–550 (ERCQLCDGMGHNAKQCRR). Residues 544–571 (NAKQCRRRDGNQGQRPGKGLSSGSWPVS) form a disordered region. The 82-residue stretch at 609-690 (ITALLDSGAD…VRGSILGRDC (82 aa)) folds into the Peptidase A2 domain. Asp-614 (for protease activity; shared with dimeric partner) is an active-site residue. The region spanning 750–938 (LQLGHIEPSL…PGVQYLGYKL (189 aa)) is the Reverse transcriptase domain. Residues Asp-815, Asp-890, Asp-891, Asp-1158, Glu-1192, Asp-1213, and Asp-1272 each contribute to the Mg(2+) site. The region spanning 1149–1280 (PVPGPTAFTD…ADSQATFQAY (132 aa)) is the RNase H type-1 domain. The Integrase-type zinc finger occupies 1280 to 1321 (YPLREAKDLHTALHIGPRALSKACNISMQQAREVVQTCPHCN). Zn(2+)-binding residues include His-1289, His-1293, Cys-1317, and Cys-1320. Residues 1333 to 1496 (RGLGPLQIWQ…TPIQKHWRPT (164 aa)) form the Integrase catalytic domain. Asp-1344, Asp-1401, and Glu-1437 together coordinate Mg(2+). The integrase-type DNA-binding region spans 1502 to 1550 (PPVKIRIETGEWEKGWNVLVWGRGYAAVKNRDTDKVIWVPSRKVKPDVT). Residues 1548–1567 (DVTQKDEVTKKDEASPLFAG) are involved in homooctamerization. The segment at 1566–1603 (AGISDWIPWEDEQEGLQGETASNKQERPGEDTLAANES) is disordered.

Active as a homodimer. As to quaternary structure, homodimer. Homomultimer. Homohexamer. In terms of assembly, homodimer; further associates as a homooctamer. Heterodimer of alpha and beta subunits. Three forms of RT exist: alpha-alpha (alpha-Pol), beta-beta (beta-Pol), and alpha-beta, with the major form being the heterodimer. Both the polymerase and RNase H active sites are located in the alpha subunit of heterodimeric RT alpha-beta. The cofactor is Mg(2+). Mn(2+) serves as cofactor. Post-translationally, specific enzymatic cleavages in vivo yield mature proteins. In terms of processing, capsid protein p27: The cleavage at the C-terminus is slowly trimmed by the viral protease, sometimes being cut internally thereby generating the short version of the capsid protein and a capsid protein C-terminally extended by 3 amino acids in a ratio of 2:1.

The protein localises to the virion. The enzyme catalyses DNA(n) + a 2'-deoxyribonucleoside 5'-triphosphate = DNA(n+1) + diphosphate. It carries out the reaction Endonucleolytic cleavage to 5'-phosphomonoester.. Capsid protein p27: Self-associates to form the irregular polyhedron core composed of hexamers and pentamers, that encapsulates the genomic RNA-nucleocapsid complex. Assembles as a tube in vitro. Binds to inositol hexakisphosphate (IP6), which allows the assembly of the polyhedral capsid. In terms of biological role, spacer peptide: Plays a role in the oligomerization of the Gag polyprotein and in the stabilization of the immature particle. Essential layering element during tube assembly. Its function is as follows. Binds strongly to viral nucleic acids and promotes their packaging. Plays a role in the maturation-stabilization of the viral dimeric RNA via highly structured zinc-binding motifs. Functionally, the aspartyl protease that mediates proteolytic cleavages of Gag and Gag-Pol polyproteins during or shortly after the release of the virion from the plasma membrane. Cleavages take place as an ordered, step-wise cascade to yield mature proteins. This process is called maturation. Displays maximal activity during the budding process just prior to particle release from the cell. Catalyzes viral DNA integration into the host chromosome, by performing a series of DNA cutting and joining reactions. This recombination event is an essential step in the viral replication cycle. Has a strong preference for using the 3'-OH at the viral DNA end as a nucleophile. The chain is Gag-Pol polyprotein (gag-pol) from Avian leukosis virus subgroup A (isolate RSA) (ALV-A RSA).